The chain runs to 426 residues: Dihydroorotase (426 aa).

2 residues coordinate Zn(2+): H58 and H60. Substrate contacts are provided by residues 60–62 (HLR) and N92. Residues D150, H177, and H230 each coordinate Zn(2+). A substrate-binding site is contributed by N276. Residue D303 participates in Zn(2+) binding. D303 is a catalytic residue. Residues H307 and 321–322 (FG) each bind substrate.

This sequence belongs to the metallo-dependent hydrolases superfamily. DHOase family. Class I DHOase subfamily. Requires Zn(2+) as cofactor.

The catalysed reaction is (S)-dihydroorotate + H2O = N-carbamoyl-L-aspartate + H(+). Its pathway is pyrimidine metabolism; UMP biosynthesis via de novo pathway; (S)-dihydroorotate from bicarbonate: step 3/3. In terms of biological role, catalyzes the reversible cyclization of carbamoyl aspartate to dihydroorotate. In Listeria welshimeri serovar 6b (strain ATCC 35897 / DSM 20650 / CCUG 15529 / CIP 8149 / NCTC 11857 / SLCC 5334 / V8), this protein is Dihydroorotase.